The sequence spans 129 residues: Large ribosomal subunit protein bL12 (129 aa).

Belongs to the bacterial ribosomal protein bL12 family. In terms of assembly, homodimer. Part of the ribosomal stalk of the 50S ribosomal subunit. Forms a multimeric L10(L12)X complex, where L10 forms an elongated spine to which 2 to 4 L12 dimers bind in a sequential fashion. Binds GTP-bound translation factors.

Forms part of the ribosomal stalk which helps the ribosome interact with GTP-bound translation factors. Is thus essential for accurate translation. This Protochlamydia amoebophila (strain UWE25) protein is Large ribosomal subunit protein bL12.